A 264-amino-acid polypeptide reads, in one-letter code: Neuferricin (264 aa).

The signal sequence occupies residues 1 to 22; sequence MLRCGGRGLLLGLAVAAAAVMA. Positions 35 to 134 constitute a Cytochrome b5 heme-binding domain; the sequence is FRLFIPEELS…KNYVCVGRVT (100 aa).

It belongs to the cytochrome b5 family. MAPR subfamily.

It localises to the secreted. Its function is as follows. Heme-binding protein which promotes neuronal but not astrocyte differentiation. The chain is Neuferricin from Homo sapiens (Human).